Reading from the N-terminus, the 742-residue chain is MKDDFAEEEEVQSFGYKRFGIQEGTQCTKCKNNWALKFSIVLLYILCALLTITVAILGYKVVEKMDNVTDGMETSHQTYDNKLTAVESDLKKLGDQAGKKALSTNSELSTFRSDILDLRQQLQEITEKTSKNKDTLEKLQANGDSLVDRQSQLKETLQNNSFLITTVNKTLQAYNGYVTNLQQDTSVLQGNLQSQMYSQSVVIMNLNNLNLTQVQQRNLISNLQQSVDDTSLAIQRIKNDFQNLQQVFLQAKKDTDWLKEKVQSLQTLAANNSALAKANNDTLEDMNSQLSSFTGQMDNITTISQANEQSLKDLQDLHKDTENRTAVKFSQLEERFQVFETDIVNIISNISYTAHHLRTLTSNLNDVRTTCTDTLTRHTDDLTSLNNTLVNIRLDSISLRMQQDMMRSKLDTEVANLSVVMEEMKLVDSKHGQLIKNFTILQGPPGPRGPKGDRGSQGPPGPTGNKGQKGEKGEPGPPGPAGERGTIGPVGPPGERGSKGSKGSQGPKGSRGSPGKPGPQGPSGDPGPPGPPGKDGLPGPQGPPGFQGLQGTVGEPGVPGPRGLPGLPGVPGMPGPKGPPGPPGPSGAMEPLALQNEPTPASEVNGCPPHWKNFTDKCYYFSLEKEIFEDAKLFCEDKSSHLVFINSREEQQWIKKHTVGRESHWIGLTDSEQESEWKWLDGSPVDYKNWKAGQPDNWGSGHGPGEDCAGLIYAGQWNDFQCDEINNFICEKEREAVPSSIL.

Residues 1-37 (MKDDFAEEEEVQSFGYKRFGIQEGTQCTKCKNNWALK) lie on the Cytoplasmic side of the membrane. The helical; Signal-anchor for type II membrane protein transmembrane segment at 38–58 (FSIVLLYILCALLTITVAILG) threads the bilayer. The Extracellular portion of the chain corresponds to 59–742 (YKVVEKMDNV…EREAVPSSIL (684 aa)). An N-linked (GlcNAc...) asparagine glycan is attached at N67. The stretch at 73-142 (ETSHQTYDNK…KDTLEKLQAN (70 aa)) forms a coiled coil. 2 N-linked (GlcNAc...) asparagine glycosylation sites follow: N159 and N168. A coiled-coil region spans residues 205–254 (NLNNLNLTQVQQRNLISNLQQSVDDTSLAIQRIKNDFQNLQQVFLQAKKD). N271 carries an N-linked (GlcNAc...) asparagine glycan. Positions 439 to 608 (TILQGPPGPR…TPASEVNGCP (170 aa)) are disordered. Collagen-like domains follow at residues 452–511 (GDRG…KGSR) and 527–586 (GPPG…PGPS). Low complexity predominate over residues 501 to 514 (SKGSQGPKGSRGSP). Pro residues predominate over residues 516-532 (KPGPQGPSGDPGPPGPP). Over residues 534-556 (KDGLPGPQGPPGFQGLQGTVGEP) the composition is skewed to low complexity. The span at 571 to 585 (PGMPGPKGPPGPPGP) shows a compositional bias: pro residues. Cystine bridges form between C607-C618, C635-C730, and C708-C722. The region spanning 614–731 (FTDKCYYFSL…CDEINNFICE (118 aa)) is the C-type lectin domain. Positions 644, 646, 650, 670, and 674 each coordinate Ca(2+). A carbohydrate is bound by residues K691, Q694, and D696. Residues Q694, D696, N697, E706, D707, N718, D719, and E731 each contribute to the Ca(2+) site. Position 706 (E706) interacts with a carbohydrate. 2 residues coordinate a carbohydrate: N718 and D719.

As to quaternary structure, the extracellular domain forms a stable trimer. The extracellular domain interacts with fibrillar amyloid-beta peptide. In terms of tissue distribution, expressed in vascular endothelial cells in the heart, in perivascular macrophage and smooth muscle cells. Expressed in plaques-surrounding reactive astrocytes located in cerebral cortex and hippocampus and in leptomeningeal vessels showing characteristics of cerebral amyloid angiopathy (CAA) in a double transgenic mouse model of Alzheimer disease (at protein level). Strongly expressed in lung. Moderately expressed in heart, skeletal muscle, spleen, liver, brain, colon, testis, stomach and kidney. Expressed in neonatal astrocytes. Expressed in reactive astrocytes and vascular/perivascular cells in the brain of a double transgenic mouse model of Alzheimer disease.

Its subcellular location is the membrane. Functionally, scavenger receptor that displays several functions associated with host defense. Promotes binding and phagocytosis of Gram-positive, Gram-negative bacteria and yeast. Also binds to sialyl Lewis X or a trisaccharide and asialo-orosomucoid (ASOR). Mediates the recognition, internalization and degradation of oxidatively modified low density lipoprotein (oxLDL) by vascular endothelial cells. Binds to several carbohydrates including Gal-type ligands, D-galactose, L- and D-fucose, GalNAc, T and Tn antigens in a calcium-dependent manner and internalizes specifically GalNAc in nurse-like cells. This Mus musculus (Mouse) protein is Collectin-12 (Colec12).